A 274-amino-acid chain; its full sequence is Rhamnulose-1-phosphate aldolase (274 aa).

Residue Glu117 is part of the active site. Residues His141, His143, and His212 each contribute to the Zn(2+) site.

This sequence belongs to the aldolase class II family. RhaD subfamily. As to quaternary structure, homotetramer. The cofactor is Zn(2+).

It is found in the cytoplasm. It carries out the reaction L-rhamnulose 1-phosphate = (S)-lactaldehyde + dihydroxyacetone phosphate. It functions in the pathway carbohydrate degradation; L-rhamnose degradation; glycerone phosphate from L-rhamnose: step 3/3. Functionally, catalyzes the reversible cleavage of L-rhamnulose-1-phosphate to dihydroxyacetone phosphate (DHAP) and L-lactaldehyde. This chain is Rhamnulose-1-phosphate aldolase, found in Escherichia coli O17:K52:H18 (strain UMN026 / ExPEC).